A 413-amino-acid chain; its full sequence is Cardiolipin synthase B (413 aa).

PLD phosphodiesterase domains are found at residues 108-135 (VFRR…SAEH) and 285-312 (RRRP…DPLS). Residues H113, K115, D120, H290, K292, and D297 contribute to the active site. A disordered region spans residues 390–413 (VGPPAQPTMETQDRVETENTGVKP).

It belongs to the phospholipase D family. Cardiolipin synthase subfamily. ClsB sub-subfamily.

The protein resides in the cell membrane. The catalysed reaction is 2 a 1,2-diacyl-sn-glycero-3-phospho-(1'-sn-glycerol) = a cardiolipin + glycerol. Functionally, catalyzes the phosphatidyl group transfer from one phosphatidylglycerol molecule to another to form cardiolipin (CL) (diphosphatidylglycerol) and glycerol. This Escherichia coli O6:H1 (strain CFT073 / ATCC 700928 / UPEC) protein is Cardiolipin synthase B.